We begin with the raw amino-acid sequence, 873 residues long: Bifunctional uridylyltransferase/uridylyl-removing enzyme (873 aa).

Residues 1–332 (MKYLSPLSLS…HQGEQDDAII (332 aa)) are uridylyltransferase. A uridylyl-removing region spans residues 333-692 (IDDDFQRRGR…ISKNASRGGT (360 aa)). Positions 451 to 573 (VDEHSIRLLK…VRDEERLDYL (123 aa)) constitute an HD domain. ACT domains are found at residues 693-777 (EIFV…RPPR) and 800-873 (LMEF…RLSS).

The protein belongs to the GlnD family. Mg(2+) serves as cofactor.

The catalysed reaction is [protein-PII]-L-tyrosine + UTP = [protein-PII]-uridylyl-L-tyrosine + diphosphate. The enzyme catalyses [protein-PII]-uridylyl-L-tyrosine + H2O = [protein-PII]-L-tyrosine + UMP + H(+). With respect to regulation, uridylyltransferase (UTase) activity is inhibited by glutamine, while glutamine activates uridylyl-removing (UR) activity. Functionally, modifies, by uridylylation and deuridylylation, the PII regulatory proteins (GlnB and homologs), in response to the nitrogen status of the cell that GlnD senses through the glutamine level. Under low glutamine levels, catalyzes the conversion of the PII proteins and UTP to PII-UMP and PPi, while under higher glutamine levels, GlnD hydrolyzes PII-UMP to PII and UMP (deuridylylation). Thus, controls uridylylation state and activity of the PII proteins, and plays an important role in the regulation of nitrogen assimilation and metabolism. The chain is Bifunctional uridylyltransferase/uridylyl-removing enzyme from Aliivibrio fischeri (strain MJ11) (Vibrio fischeri).